The primary structure comprises 448 residues: Asparagine--tRNA ligase (448 aa).

It belongs to the class-II aminoacyl-tRNA synthetase family. In terms of assembly, homodimer.

It is found in the cytoplasm. The enzyme catalyses tRNA(Asn) + L-asparagine + ATP = L-asparaginyl-tRNA(Asn) + AMP + diphosphate + H(+). This is Asparagine--tRNA ligase from Streptococcus thermophilus (strain CNRZ 1066).